The primary structure comprises 227 residues: Urease accessory protein UreF (227 aa).

Belongs to the UreF family. In terms of assembly, ureD, UreF and UreG form a complex that acts as a GTP-hydrolysis-dependent molecular chaperone, activating the urease apoprotein by helping to assemble the nickel containing metallocenter of UreC. The UreE protein probably delivers the nickel.

The protein localises to the cytoplasm. Its function is as follows. Required for maturation of urease via the functional incorporation of the urease nickel metallocenter. The protein is Urease accessory protein UreF of Methylobacillus flagellatus (strain ATCC 51484 / DSM 6875 / VKM B-1610 / KT).